Reading from the N-terminus, the 180-residue chain is uncharacterized protein (180 aa).

A Nudix hydrolase domain is found at 35-163; sequence LRHRATYIVV…TPDSLKALAL (129 aa). Residues 72–94 carry the Nudix box motif; sequence GGVVQADEQLLESARREAEEELG. Positions 88 and 92 each coordinate Mg(2+).

Belongs to the Nudix hydrolase family. Mg(2+) is required as a cofactor.

This is an uncharacterized protein from Shigella flexneri.